A 666-amino-acid chain; its full sequence is MFMYPEFARKALSKLISKKLNIEKVSSKHQLVLLDYGLHGLLPKSLYLEAINSDILNVRFFPPEIINVTDIVKALQNSCRVDEYLKAVSLYHKNSLMVSGPNVVKLMIEYNLLTHSDLEWLINENVIKATYLLKINAYMINFKIDLTVDEIIDLVKDIPVGATLHLYNILNNLDLNIILRISDEYNIPPVHDILSKLTDEEMCIKLVTKYPMENVINFINQDVRYSPTFIKTIKDFVNAHLPTMYDGLNDYLHSVIVDKDLIEEYKIKSVAMFNLEYKTDVDTLTLDEQIFVEVNISYYDFRYRQFANEFRDYIMLKESRQITMQTGDKIRRFRRPMSLRSTIIKKDTDSLEDILSHIDNARKNSKVSIEDVDRIISSFRLNPCVVRRTMLSNIDIKTKIMVLKIAKDWKSCALTLSAIKGIMVTDTINTVLSKILHHHRNVFKYLTSVDNKEITVCNCSRCVSLFYRELKSIRCDLNTDDGLLARLYDLTRYALHGRINQNLIGQRCWGPLTEMLFNEDKKRKLNNLMVYIKISDMLVYGHSIEKTLIPITESLSFKLSVDTMSVSNDQYAKVVIFFNTIIEYIVATIYYRLAVLNNYVAIRHFVLKVLHTVMEACGVLFSHIKVNDKIEHELEEMVDKGIVPSYLHHLSINVISIILDDINGTR.

The helical transmembrane segment at 574 to 596 (VVIFFNTIIEYIVATIYYRLAVL) threads the bilayer.

Belongs to the orthopoxvirus OPG074 family.

It localises to the membrane. The sequence is that of Protein OPG074 (OPG074) from Homo sapiens (Human).